The chain runs to 542 residues: CTP synthase (542 aa).

Positions 1 to 265 (MTRYVFITGG…DREILAHFQM (265 aa)) are amidoligase domain. Ser13 contributes to the CTP binding site. Ser13 is a binding site for UTP. Residues 14–19 (SLGKGL) and Asp71 contribute to the ATP site. Mg(2+) contacts are provided by Asp71 and Glu139. Residues 146 to 148 (DIE), 186 to 191 (KTKPTQ), and Lys222 each bind CTP. UTP is bound by residues 186–191 (KTKPTQ) and Lys222. An ATP-binding site is contributed by 238 to 240 (RDV). Residues 291–541 (TIAIVGKYTG…IAAAIEQSRL (251 aa)) form the Glutamine amidotransferase type-1 domain. Gly353 contributes to the L-glutamine binding site. Residue Cys380 is the Nucleophile; for glutamine hydrolysis of the active site. L-glutamine contacts are provided by residues 381-384 (FGMQ), Glu404, and Arg469. Active-site residues include His514 and Glu516.

It belongs to the CTP synthase family. As to quaternary structure, homotetramer.

The enzyme catalyses UTP + L-glutamine + ATP + H2O = CTP + L-glutamate + ADP + phosphate + 2 H(+). It carries out the reaction L-glutamine + H2O = L-glutamate + NH4(+). It catalyses the reaction UTP + NH4(+) + ATP = CTP + ADP + phosphate + 2 H(+). It participates in pyrimidine metabolism; CTP biosynthesis via de novo pathway; CTP from UDP: step 2/2. Allosterically activated by GTP, when glutamine is the substrate; GTP has no effect on the reaction when ammonia is the substrate. The allosteric effector GTP functions by stabilizing the protein conformation that binds the tetrahedral intermediate(s) formed during glutamine hydrolysis. Inhibited by the product CTP, via allosteric rather than competitive inhibition. Its function is as follows. Catalyzes the ATP-dependent amination of UTP to CTP with either L-glutamine or ammonia as the source of nitrogen. Regulates intracellular CTP levels through interactions with the four ribonucleotide triphosphates. In Methylorubrum populi (strain ATCC BAA-705 / NCIMB 13946 / BJ001) (Methylobacterium populi), this protein is CTP synthase.